Consider the following 239-residue polypeptide: Probable plastid-lipid-associated protein 8, chloroplastic (239 aa).

The transit peptide at 1-52 (MAATASSLTIASSFSEPRTQIHSSRRLNLPLQYSIPYKVLRSRSRRLGLVVS) directs the protein to the chloroplast. Serine 53 bears the N-acetylserine mark.

The protein belongs to the PAP/fibrillin family.

The protein resides in the plastid. The protein localises to the chloroplast. This is Probable plastid-lipid-associated protein 8, chloroplastic (PAP8) from Arabidopsis thaliana (Mouse-ear cress).